The primary structure comprises 202 residues: Putative pituitary tumor-transforming gene 3 protein (202 aa).

Residues 61-64 carry the D-box motif; it reads RKAL. The SH3-binding signature appears at 163 to 173; that stretch reads PPSPLKMPSPP.

This sequence belongs to the securin family.

It localises to the cytoplasm. The protein localises to the nucleus. This Pan troglodytes (Chimpanzee) protein is Putative pituitary tumor-transforming gene 3 protein (PTTG3).